We begin with the raw amino-acid sequence, 182 residues long: Putative lipoprotein LpqE (182 aa).

The first 29 residues, 1–29 (MNRCNIRLRLAGMTTWVASIALLAAALSG), serve as a signal peptide directing secretion. A lipid anchor (N-palmitoyl cysteine) is attached at C30. Residue C30 is the site of S-diacylglycerol cysteine attachment.

The protein resides in the cell membrane. The protein is Putative lipoprotein LpqE (lpqE) of Mycobacterium bovis (strain ATCC BAA-935 / AF2122/97).